The following is a 131-amino-acid chain: Profilin-5 (131 aa).

The protein belongs to the profilin family. Occurs in many kinds of cells as a complex with monomeric actin in a 1:1 ratio.

The protein localises to the cytoplasm. The protein resides in the cytoskeleton. Functionally, binds to actin and affects the structure of the cytoskeleton. At high concentrations, profilin prevents the polymerization of actin, whereas it enhances it at low concentrations. By binding to PIP2, it inhibits the formation of IP3 and DG. The polypeptide is Profilin-5 (Hevea brasiliensis (Para rubber tree)).